We begin with the raw amino-acid sequence, 227 residues long: E3 ubiquitin-protein ligase ZNRF1 (227 aa).

The tract at residues 1 to 42 is disordered; it reads MGGKQSTAARSRGPFPGVSTDDSAVPPPGGAPHFGHYRTGGG. Residue glycine 2 is the site of N-myristoyl glycine attachment. Positions 2–10 are required for endosomal and lysosomal localization and myristoylation; that stretch reads GGKQSTAAR. 3 positions are modified to phosphoserine: serine 50, serine 52, and serine 53. A disordered region spans residues 68–105; the sequence is PFGLYTPASRGTGDSERAPGGGGSASDSTYAHGNGYQE. Phosphotyrosine; by SRC is present on tyrosine 103. Serine 123 is modified (phosphoserine). An RING-type; atypical zinc finger spans residues 184–225; it reads CVICLEELLQGDTIARLPCLCIYHKSCIDSWFEVNRSCPEHP.

Interacts with AKT1, GLUL and TUBB2A. Interacts with ZNRF2. Interacts (via its RING domain) with UBE2N. Interacts (when phosphorylated) with YWHAE. N-myristoylation targets ZNRF1 to intracellular membranes. In terms of processing, phosphorylated by SRC at Tyr-103; leading to 'Lys-63'-linked ubiquitination of TLR3, lysosomal trafficking and degradation. As to expression, expressed primarily in the nervous system, with expression higher in developing brain relative to adult. Expressed at low levels in testis and thymus.

Its subcellular location is the endosome. It is found in the lysosome. It localises to the membrane. The protein localises to the cytoplasmic vesicle. The protein resides in the secretory vesicle. Its subcellular location is the synaptic vesicle membrane. The enzyme catalyses S-ubiquitinyl-[E2 ubiquitin-conjugating enzyme]-L-cysteine + [acceptor protein]-L-lysine = [E2 ubiquitin-conjugating enzyme]-L-cysteine + N(6)-ubiquitinyl-[acceptor protein]-L-lysine.. It participates in protein modification; protein ubiquitination. In terms of biological role, E3 ubiquitin-protein ligase that plays a role in different processes including cell differentiation, receptor recycling or regulation of inflammation. Mediates the ubiquitination of AKT1 and GLUL, thereby playing a role in neuron cells differentiation. Plays a role in the establishment and maintenance of neuronal transmission and plasticity. Regulates Schwann cells differentiation by mediating ubiquitination of GLUL. Promotes neurodegeneration by mediating 'Lys-48'-linked polyubiquitination and subsequent degradation of AKT1 in axons: degradation of AKT1 prevents AKT1-mediated phosphorylation of GSK3B, leading to GSK3B activation and phosphorylation of DPYSL2/CRMP2 followed by destabilization of microtubule assembly in axons. Ubiquitinates the Na(+)/K(+) ATPase alpha-1 subunit/ATP1A1 and thereby influences its endocytosis and/or degradation. Controls ligand-induced EGFR signaling via mediating receptor ubiquitination and recruitment of the ESCRT machinery. Acts as a negative feedback mechanism controlling TLR3 trafficking by mediating TLR3 'Lys-63'-linked polyubiquitination to reduce type I IFN production. Modulates inflammation by promoting caveolin-1/CAV1 ubiquitination and degradation to regulate TLR4-activated immune response. The protein is E3 ubiquitin-protein ligase ZNRF1 (ZNRF1) of Homo sapiens (Human).